Here is a 128-residue protein sequence, read N- to C-terminus: Small ribosomal subunit protein uS9 (128 aa).

This sequence belongs to the universal ribosomal protein uS9 family.

The sequence is that of Small ribosomal subunit protein uS9 from Flavobacterium psychrophilum (strain ATCC 49511 / DSM 21280 / CIP 103535 / JIP02/86).